The following is a 391-amino-acid chain: MDEEPSGPSLDMPATAEPSSSETDKGVSPVLAAIDKSSSMEEEPGPDRATTPPVWERGGPTGGTQQGASPAPDSGHSGPGHTLGPTSTVSGTSEDLRPTRRRPPPGKQIPCSSPGCCLSFPSVRDLAQHLRTHCPPKQSLEGKLFRCSALSCTETFPNMQELVAHGKLHYKPNRYFKCENCLLRIRTHRSLFKHLHVCAEHAQSPAPPPPPPALDRESPASERPPESDPAPAPGLPYPLLEPFTTPAPAPTGPFLPYLNPAPFGLSPPRLRPFLAAAPGPPASSAAVWKKSQGAGGSPRRPQGGSDAPSGHAAPSRIVWEHTRGRYSCMQCAFSTASRPAMTLHLEDHRPGGPAAPAPGQPRPDAPADPAPLAPKASPLLSEGECPVFSPL.

Residues 1 to 110 (MDEEPSGPSL…RRPPPGKQIP (110 aa)) form a disordered region. Over residues 84 to 93 (GPTSTVSGTS) the composition is skewed to polar residues. 3 C2H2-type zinc fingers span residues 109–133 (IPCS…LRTH), 145–169 (FRCS…GKLH), and 176–201 (FKCE…CAEH). Disordered stretches follow at residues 201–243 (HAQS…LEPF), 274–312 (LAAA…SGHA), and 344–391 (HLED…FSPL). Residues 214 to 226 (LDRESPASERPPE) are compositionally biased toward basic and acidic residues. The span at 227-236 (SDPAPAPGLP) shows a compositional bias: pro residues. Residues 274 to 286 (LAAAPGPPASSAA) show a composition bias toward low complexity. Residues 326–348 (YSCMQCAFSTASRPAMTLHLEDH) form a C2H2-type 4 zinc finger. Pro residues predominate over residues 353–372 (PAAPAPGQPRPDAPADPAPL).

Belongs to the krueppel C2H2-type zinc-finger protein family.

Its subcellular location is the nucleus. In terms of biological role, may be involved in transcriptional regulation. The protein is Zinc finger protein 414 (ZNF414) of Bos taurus (Bovine).